Consider the following 246-residue polypeptide: MAPVELEIVYQDEYFVAVNKPAGMLVHRSWLDKHETQFVMQTLRDQIGQHVFPLHRLDRPTSGVLVFALSSEVASQVMPMFAEHKMEKTYHAIVRGWIEEEGVLDYALKVELDKIADKFASQEKEAQEAVTAYKPLAKVEVPYSTGKFPTTRYCLMEMKPKTGRKHQLRRHMAHLRHPIVGDTSHGDGKHNKLFRNEFDSHRLLLHASELRFVHPFTNEELVMKASIDDTWQQLFTRFEWDEELVK.

Residue aspartate 58 is part of the active site.

It belongs to the pseudouridine synthase RluA family.

The catalysed reaction is uridine(65) in tRNA = pseudouridine(65) in tRNA. Responsible for synthesis of pseudouridine from uracil-65 in transfer RNAs. The protein is tRNA pseudouridine synthase C (truC) of Vibrio parahaemolyticus serotype O3:K6 (strain RIMD 2210633).